A 241-amino-acid polypeptide reads, in one-letter code: Uridylate kinase (241 aa).

Position 15 to 18 (15 to 18) interacts with ATP; sequence KLSG. The involved in allosteric activation by GTP stretch occupies residues 23–28; sequence GTEGFG. UMP is bound at residue glycine 57. 2 residues coordinate ATP: glycine 58 and arginine 62. Residues aspartate 77 and 138-145 each bind UMP; that span reads TGNPFFTT. The ATP site is built by threonine 165, tyrosine 171, and aspartate 174.

It belongs to the UMP kinase family. In terms of assembly, homohexamer.

It is found in the cytoplasm. The catalysed reaction is UMP + ATP = UDP + ADP. The protein operates within pyrimidine metabolism; CTP biosynthesis via de novo pathway; UDP from UMP (UMPK route): step 1/1. Allosterically activated by GTP. Inhibited by UTP. In terms of biological role, catalyzes the reversible phosphorylation of UMP to UDP. The protein is Uridylate kinase of Pectobacterium atrosepticum (strain SCRI 1043 / ATCC BAA-672) (Erwinia carotovora subsp. atroseptica).